A 302-amino-acid chain; its full sequence is tRNA dimethylallyltransferase 1 (302 aa).

ATP is bound at residue 6–13 (GPTACGKT). Position 8-13 (8-13 (TACGKT)) interacts with substrate. Interaction with substrate tRNA stretches follow at residues 31 to 34 (DSRQ) and 154 to 158 (QRAIR).

Belongs to the IPP transferase family. As to quaternary structure, monomer. Mg(2+) is required as a cofactor.

The catalysed reaction is adenosine(37) in tRNA + dimethylallyl diphosphate = N(6)-dimethylallyladenosine(37) in tRNA + diphosphate. Functionally, catalyzes the transfer of a dimethylallyl group onto the adenine at position 37 in tRNAs that read codons beginning with uridine, leading to the formation of N6-(dimethylallyl)adenosine (i(6)A). This is tRNA dimethylallyltransferase 1 from Porphyromonas gingivalis (strain ATCC 33277 / DSM 20709 / CIP 103683 / JCM 12257 / NCTC 11834 / 2561).